Consider the following 147-residue polypeptide: Phospholipase A2-beta (147 aa).

Residues 1-28 (MMFRTSLMRFAAAFFAIVFVVLVGVARS) form the signal peptide. 6 disulfide bridges follow: C31–C58, C35–C64, C40–C117, C51–C71, C70–C95, and C77–C88. Ca(2+) is bound by residues Y50, G52, and H55. Residue H74 is part of the active site. D75 lines the Ca(2+) pocket. The short motif at 144 to 147 (KTEL) is the Prevents secretion from ER element.

It belongs to the phospholipase A2 family. The cofactor is Ca(2+). As to expression, ubiquitous but expressed at a low level. Detected in vascular tissues and in the guard cells. Predominantly detected in pollen.

The protein resides in the secreted. It localises to the endoplasmic reticulum. The catalysed reaction is a 1,2-diacyl-sn-glycero-3-phosphocholine + H2O = a 1-acyl-sn-glycero-3-phosphocholine + a fatty acid + H(+). Its activity is regulated as follows. Inhibited by aristolochic acid. Its function is as follows. PA2 catalyzes the calcium-dependent hydrolysis of the 2-acyl groups in 3-sn-phosphoglycerides. Releases lysophospholipids (LPLs) and free fatty acids (FFAs) from membrane phospholipids in response to hormones and other external stimuli. Regulates the process of cell elongation and plays important roles in shoot gravitropism by mediating auxin-induced cell elongation. Involved in stomatal opening in response to light. Plays a role in pollen development and germination and tube growth. This chain is Phospholipase A2-beta (PLA2-BETA), found in Arabidopsis thaliana (Mouse-ear cress).